We begin with the raw amino-acid sequence, 250 residues long: Leucyl/phenylalanyl-tRNA--protein transferase (250 aa).

It belongs to the L/F-transferase family.

It is found in the cytoplasm. The enzyme catalyses N-terminal L-lysyl-[protein] + L-leucyl-tRNA(Leu) = N-terminal L-leucyl-L-lysyl-[protein] + tRNA(Leu) + H(+). It catalyses the reaction N-terminal L-arginyl-[protein] + L-leucyl-tRNA(Leu) = N-terminal L-leucyl-L-arginyl-[protein] + tRNA(Leu) + H(+). It carries out the reaction L-phenylalanyl-tRNA(Phe) + an N-terminal L-alpha-aminoacyl-[protein] = an N-terminal L-phenylalanyl-L-alpha-aminoacyl-[protein] + tRNA(Phe). In terms of biological role, functions in the N-end rule pathway of protein degradation where it conjugates Leu, Phe and, less efficiently, Met from aminoacyl-tRNAs to the N-termini of proteins containing an N-terminal arginine or lysine. This is Leucyl/phenylalanyl-tRNA--protein transferase from Cupriavidus pinatubonensis (strain JMP 134 / LMG 1197) (Cupriavidus necator (strain JMP 134)).